A 232-amino-acid chain; its full sequence is Sugar fermentation stimulation protein homolog (232 aa).

This sequence belongs to the SfsA family.

This chain is Sugar fermentation stimulation protein homolog, found in Shouchella clausii (strain KSM-K16) (Alkalihalobacillus clausii).